The primary structure comprises 637 residues: Capsid scaffolding protein (637 aa).

Catalysis depends on charge relay system residues histidine 61, serine 129, and histidine 148. Disordered regions lie at residues 262–326 (PERG…PGDG), 414–479 (LPAA…PHET), and 502–608 (HAPY…EAGA). Low complexity predominate over residues 277–317 (SPAASVPAPQVAVRARQVASSSSSSSFPAPADMNPVSASGA). The interaction with pAP stretch occupies residues 326–345 (GSYLWIPASHYNQLVTGQSA). Positions 428-431 (KRRR) match the Nuclear localization signal motif. Basic and acidic residues-rich tracts occupy residues 432-450 (HEVEQPEYDCGRDEPDRDF) and 457-468 (ARPEPRPVDSRR). 2 stretches are compositionally biased toward pro residues: residues 537–559 (LPPPHIAPPGPPLSGAVPPPSYP) and 566–594 (GPAPPLHQPSPAHAHPPPPPPGPTPPPAA). Positions 595 to 608 (SLPQPEAPGAEAGA) are enriched in low complexity. The tract at residues 617–637 (HVNVDTARAADLFVSQMMGSR) is interaction with major capsid protein.

Belongs to the herpesviridae capsid scaffolding protein family. As to quaternary structure, homomultimer. Interacts with major capsid protein. In terms of assembly, exists in a monomer-dimer equilibrium with the dimer being the active species. In terms of processing, capsid scaffolding protein is cleaved by assemblin after formation of the spherical procapsid. As a result, the capsid obtains its mature, icosahedral shape. Cleavages occur at two or more sites: release (R-site) and maturation (M-site).

The protein localises to the host cytoplasm. Its subcellular location is the host nucleus. It catalyses the reaction Cleaves -Ala-|-Ser- and -Ala-|-Ala- bonds in the scaffold protein.. In terms of biological role, acts as a scaffold protein by binding major capsid protein in the cytoplasm, inducing the nuclear localization of both proteins. Multimerizes in the nucleus such as major capsid protein forms the icosahedral T=16 capsid. Autocatalytic cleavage releases the assembly protein, and subsequently abolishes interaction with major capsid protein. Cleavages products are evicted from the capsid before or during DNA packaging. Functionally, protease that plays an essential role in virion assembly within the nucleus. Catalyzes the cleavage of the assembly protein after formation of the spherical procapsid. By that cleavage, the capsid matures and gains its icosahedral shape. The cleavage sites seem to include -Ala-Ser-, -Ala-Ala-, as well as Ala-Thr bonds. Assemblin and cleavages products are evicted from the capsid before or during DNA packaging. Plays a major role in capsid assembly. Acts as a scaffold protein by binding major capsid protein. Multimerizes in the nucleus such as major capsid protein forms the icosahedral T=16 capsid. Cleaved by assemblin after capsid completion. The cleavages products are evicted from the capsid before or during DNA packaging. This is Capsid scaffolding protein (UL26) from Homo sapiens (Human).